A 616-amino-acid chain; its full sequence is Dihydroxy-acid dehydratase (616 aa).

Asp-81 is a binding site for Mg(2+). Residue Cys-122 coordinates [2Fe-2S] cluster. Mg(2+) contacts are provided by Asp-123 and Lys-124. N6-carboxylysine is present on Lys-124. Cys-195 contacts [2Fe-2S] cluster. Residue Glu-491 participates in Mg(2+) binding. The active-site Proton acceptor is the Ser-517.

Belongs to the IlvD/Edd family. Homodimer. It depends on [2Fe-2S] cluster as a cofactor. Mg(2+) serves as cofactor.

The enzyme catalyses (2R)-2,3-dihydroxy-3-methylbutanoate = 3-methyl-2-oxobutanoate + H2O. The catalysed reaction is (2R,3R)-2,3-dihydroxy-3-methylpentanoate = (S)-3-methyl-2-oxopentanoate + H2O. The protein operates within amino-acid biosynthesis; L-isoleucine biosynthesis; L-isoleucine from 2-oxobutanoate: step 3/4. Its pathway is amino-acid biosynthesis; L-valine biosynthesis; L-valine from pyruvate: step 3/4. In terms of biological role, functions in the biosynthesis of branched-chain amino acids. Catalyzes the dehydration of (2R,3R)-2,3-dihydroxy-3-methylpentanoate (2,3-dihydroxy-3-methylvalerate) into 2-oxo-3-methylpentanoate (2-oxo-3-methylvalerate) and of (2R)-2,3-dihydroxy-3-methylbutanoate (2,3-dihydroxyisovalerate) into 2-oxo-3-methylbutanoate (2-oxoisovalerate), the penultimate precursor to L-isoleucine and L-valine, respectively. The chain is Dihydroxy-acid dehydratase from Escherichia coli (strain SMS-3-5 / SECEC).